The chain runs to 206 residues: Uridine kinase (206 aa).

Residue 11 to 18 (GGTGSGKS) participates in ATP binding.

Belongs to the uridine kinase family.

It localises to the cytoplasm. The catalysed reaction is uridine + ATP = UMP + ADP + H(+). It carries out the reaction cytidine + ATP = CMP + ADP + H(+). The protein operates within pyrimidine metabolism; CTP biosynthesis via salvage pathway; CTP from cytidine: step 1/3. It participates in pyrimidine metabolism; UMP biosynthesis via salvage pathway; UMP from uridine: step 1/1. The sequence is that of Uridine kinase from Clostridium botulinum (strain 657 / Type Ba4).